Reading from the N-terminus, the 274-residue chain is 3-methyl-2-oxobutanoate hydroxymethyltransferase (274 aa).

The Mg(2+) site is built by aspartate 46 and aspartate 85. 3-methyl-2-oxobutanoate is bound by residues 46–47 (DS), aspartate 85, and lysine 114. Glutamate 116 contacts Mg(2+). The Proton acceptor role is filled by glutamate 183.

Belongs to the PanB family. In terms of assembly, homodecamer; pentamer of dimers. It depends on Mg(2+) as a cofactor.

Its subcellular location is the cytoplasm. The enzyme catalyses 3-methyl-2-oxobutanoate + (6R)-5,10-methylene-5,6,7,8-tetrahydrofolate + H2O = 2-dehydropantoate + (6S)-5,6,7,8-tetrahydrofolate. Its pathway is cofactor biosynthesis; coenzyme A biosynthesis. Its function is as follows. Catalyzes the reversible reaction in which hydroxymethyl group from 5,10-methylenetetrahydrofolate is transferred onto alpha-ketoisovalerate to form ketopantoate. The chain is 3-methyl-2-oxobutanoate hydroxymethyltransferase from Aeropyrum pernix (strain ATCC 700893 / DSM 11879 / JCM 9820 / NBRC 100138 / K1).